Reading from the N-terminus, the 908-residue chain is NADH-quinone oxidoreductase subunit G (908 aa).

One can recognise a 2Fe-2S ferredoxin-type domain in the interval 2–83 (ATIHVDGKEY…GTFISIDDEE (82 aa)). Residues cysteine 34, cysteine 45, cysteine 48, and cysteine 67 each contribute to the [2Fe-2S] cluster site. Residues 83–122 (EAKQFRESVVEWLMTNHPHDCPVCEEGGNCHLQDMTVMTG) form the 4Fe-4S His(Cys)3-ligated-type domain. The [4Fe-4S] cluster site is built by histidine 99, cysteine 103, cysteine 106, cysteine 112, cysteine 151, cysteine 154, cysteine 157, cysteine 201, cysteine 228, cysteine 231, cysteine 235, and cysteine 263. Residues 221-277 (MQFAPSICQQCSIGCNISPGERYGELRRIENRYNGTVNHYFLCDRGRFGYGYVNLKD) form the 4Fe-4S Mo/W bis-MGD-type domain.

It belongs to the complex I 75 kDa subunit family. As to quaternary structure, composed of 13 different subunits. Subunits NuoCD, E, F, and G constitute the peripheral sector of the complex. [2Fe-2S] cluster is required as a cofactor. The cofactor is [4Fe-4S] cluster.

It is found in the cytoplasm. It localises to the cell inner membrane. The enzyme catalyses a quinone + NADH + 5 H(+)(in) = a quinol + NAD(+) + 4 H(+)(out). Functionally, NDH-1 shuttles electrons from NADH, via FMN and iron-sulfur (Fe-S) centers, to quinones in the respiratory chain. The immediate electron acceptor for the enzyme in this species is believed to be ubiquinone. Couples the redox reaction to proton translocation (for every two electrons transferred, four hydrogen ions are translocated across the cytoplasmic membrane), and thus conserves the redox energy in a proton gradient. The protein is NADH-quinone oxidoreductase subunit G (nuoG) of Escherichia coli (strain K12).